A 271-amino-acid polypeptide reads, in one-letter code: MLRFFPQKNKYVEEASQYAFDKEGQIPQHIAIIMDGNGRWAQNRRLPRIAGHKEGMDTVKKITKHASHLGVKVLTLYAFSTENWKRPTDEVNFLMQLPVDFFDTFVPELIKENVKVNVMGYQEFLPSHTQDAVKRAIEQTKDNTGMVLNFALNYGARAELLTAMKQIAAEVSEKAYTADEITEETIADHLMTGFLPTELRDPELLIRTSGEERISNFLLWQIAYSELFFTKALWPDFSGDTLETAIASFQNRNRRFGGLKETTETEGSDPQ.

Residue Asp-35 is part of the active site. Asp-35 is a binding site for Mg(2+). Residues 36–39 (GNGR), Trp-40, Arg-48, His-52, and 80–82 (STE) contribute to the substrate site. The active-site Proton acceptor is Asn-83. Residues Trp-84, Arg-86, Arg-207, and 213–215 (RIS) contribute to the substrate site. Mg(2+) is bound at residue Glu-226.

Belongs to the UPP synthase family. In terms of assembly, homodimer. Mg(2+) serves as cofactor.

Its function is as follows. Catalyzes the condensation of isopentenyl diphosphate (IPP) with allylic pyrophosphates generating different type of terpenoids. This Enterococcus faecalis (strain ATCC 700802 / V583) protein is Isoprenyl transferase.